A 145-amino-acid chain; its full sequence is Putative pre-16S rRNA nuclease (145 aa).

It belongs to the YqgF nuclease family.

It is found in the cytoplasm. Functionally, could be a nuclease involved in processing of the 5'-end of pre-16S rRNA. In Levilactobacillus brevis (strain ATCC 367 / BCRC 12310 / CIP 105137 / JCM 1170 / LMG 11437 / NCIMB 947 / NCTC 947) (Lactobacillus brevis), this protein is Putative pre-16S rRNA nuclease.